Reading from the N-terminus, the 317-residue chain is tRNA dimethylallyltransferase (317 aa).

Position 14–21 (14–21 (GPTASGKS)) interacts with ATP. 16–21 (TASGKS) is a binding site for substrate. Interaction with substrate tRNA regions lie at residues 39 to 42 (DSVL) and 163 to 167 (QRIQR).

The protein belongs to the IPP transferase family. Monomer. It depends on Mg(2+) as a cofactor.

It catalyses the reaction adenosine(37) in tRNA + dimethylallyl diphosphate = N(6)-dimethylallyladenosine(37) in tRNA + diphosphate. Catalyzes the transfer of a dimethylallyl group onto the adenine at position 37 in tRNAs that read codons beginning with uridine, leading to the formation of N6-(dimethylallyl)adenosine (i(6)A). This is tRNA dimethylallyltransferase from Xylella fastidiosa (strain M23).